Here is a 140-residue protein sequence, read N- to C-terminus: Nucleoside diphosphate kinase (140 aa).

Positions 10, 58, 86, 92, 103, and 113 each coordinate ATP. Histidine 116 functions as the Pros-phosphohistidine intermediate in the catalytic mechanism.

It belongs to the NDK family. In terms of assembly, homotetramer. Mg(2+) serves as cofactor.

It localises to the cytoplasm. The catalysed reaction is a 2'-deoxyribonucleoside 5'-diphosphate + ATP = a 2'-deoxyribonucleoside 5'-triphosphate + ADP. It carries out the reaction a ribonucleoside 5'-diphosphate + ATP = a ribonucleoside 5'-triphosphate + ADP. Functionally, major role in the synthesis of nucleoside triphosphates other than ATP. The ATP gamma phosphate is transferred to the NDP beta phosphate via a ping-pong mechanism, using a phosphorylated active-site intermediate. The chain is Nucleoside diphosphate kinase from Haemophilus influenzae (strain PittEE).